We begin with the raw amino-acid sequence, 270 residues long: Putative phosphoenolpyruvate synthase regulatory protein (270 aa).

150 to 157 (GVSRCGKT) provides a ligand contact to ADP.

It belongs to the pyruvate, phosphate/water dikinase regulatory protein family. PSRP subfamily.

The catalysed reaction is [pyruvate, water dikinase] + ADP = [pyruvate, water dikinase]-phosphate + AMP + H(+). The enzyme catalyses [pyruvate, water dikinase]-phosphate + phosphate + H(+) = [pyruvate, water dikinase] + diphosphate. Bifunctional serine/threonine kinase and phosphorylase involved in the regulation of the phosphoenolpyruvate synthase (PEPS) by catalyzing its phosphorylation/dephosphorylation. The protein is Putative phosphoenolpyruvate synthase regulatory protein of Shewanella oneidensis (strain ATCC 700550 / JCM 31522 / CIP 106686 / LMG 19005 / NCIMB 14063 / MR-1).